A 1031-amino-acid polypeptide reads, in one-letter code: Error-prone DNA polymerase (1031 aa).

The protein belongs to the DNA polymerase type-C family. DnaE2 subfamily.

It is found in the cytoplasm. The enzyme catalyses DNA(n) + a 2'-deoxyribonucleoside 5'-triphosphate = DNA(n+1) + diphosphate. Its function is as follows. DNA polymerase involved in damage-induced mutagenesis and translesion synthesis (TLS). It is not the major replicative DNA polymerase. The chain is Error-prone DNA polymerase from Pseudomonas syringae pv. syringae (strain B728a).